The primary structure comprises 895 residues: Zinc finger protein 574 (895 aa).

C2H2-type zinc fingers lie at residues 16–38 (YVCS…QNSH), 76–98 (YQCL…QELH), and 126–148 (YECV…RQTH). Residue S164 is modified to Phosphoserine. The segment at 214 to 236 (YKCSECSQLFQLPADFLEHQATH) adopts a C2H2-type 4 zinc-finger fold. The segment at 239–301 (APVPESQEPA…RARRNNSGEA (63 aa)) is disordered. The segment covering 247-257 (PALQQEVQASS) has biased composition (polar residues). Over residues 274–287 (HSYELRNGEAIGRD) the composition is skewed to basic and acidic residues. The residue at position 298 (S298) is a Phosphoserine. 4 consecutive C2H2-type zinc fingers follow at residues 309–331 (LFCS…LRSH), 336–358 (FKCP…LGDH), 364–386 (FLCV…RRAH), and 392–413 (HSCP…RRTH). A disordered region spans residues 434–460 (FPEPAPAETGEPEAPEPPVSEETSAGP). 6 C2H2-type zinc fingers span residues 466–489 (YRCL…RFVH), 495–517 (HKCS…LRTH), 523–545 (FPCP…RLTH), 551–573 (YRCG…RLVH), 579–601 (YRCQ…RYHH), and 607–630 (YKCR…LVVH). A C2H2-type 15; degenerate zinc finger spans residues 636 to 659 (HRCPSCGAAFPSSLRLREHRCAAA). A C2H2-type 16 zinc finger spans residues 667–689 (FECGTCGKKVGSAARLQAHEAAH). The interval 687–732 (AAHAAAGPGEVLAKEPPAPRAPRATRAPVASPAALGGTATASPAPA) is disordered. The span at 707-731 (APRATRAPVASPAALGGTATASPAP) shows a compositional bias: low complexity. S717 bears the Phosphoserine mark. T724 carries the post-translational modification Phosphothreonine. Residue S728 is modified to Phosphoserine. C2H2-type zinc fingers lie at residues 737–759 (LECS…RRIH), 765–787 (YPCP…RRLH), 793–815 (FACE…RRIH), and 821–843 (YSCP…RKTH). R831 is subject to Asymmetric dimethylarginine.

This sequence belongs to the krueppel C2H2-type zinc-finger protein family.

It is found in the nucleus. Functionally, may be involved in transcriptional regulation. The polypeptide is Zinc finger protein 574 (ZNF574) (Pongo abelii (Sumatran orangutan)).